A 366-amino-acid polypeptide reads, in one-letter code: tRNA/tmRNA (uracil-C(5))-methyltransferase (366 aa).

Residues Gln-190, Tyr-218, Asn-223, Glu-239, and Asp-299 each contribute to the S-adenosyl-L-methionine site. Catalysis depends on Cys-324, which acts as the Nucleophile. The active-site Proton acceptor is Glu-358.

Belongs to the class I-like SAM-binding methyltransferase superfamily. RNA M5U methyltransferase family. TrmA subfamily.

The enzyme catalyses uridine(54) in tRNA + S-adenosyl-L-methionine = 5-methyluridine(54) in tRNA + S-adenosyl-L-homocysteine + H(+). It catalyses the reaction uridine(341) in tmRNA + S-adenosyl-L-methionine = 5-methyluridine(341) in tmRNA + S-adenosyl-L-homocysteine + H(+). Functionally, dual-specificity methyltransferase that catalyzes the formation of 5-methyluridine at position 54 (m5U54) in all tRNAs, and that of position 341 (m5U341) in tmRNA (transfer-mRNA). The chain is tRNA/tmRNA (uracil-C(5))-methyltransferase from Klebsiella pneumoniae subsp. pneumoniae (strain ATCC 700721 / MGH 78578).